The following is a 284-amino-acid chain: MQREFVSGAGLGLRRALLEPLGAGDEVRVDFLEVAPENWIGIGGRLGRQFRELTERLPFLCHGLSLNLGGYAPLDMSLLRAIKGFIEQHGIRAYSEHLSACADDGQLYDLMPLPFSDESVRRVAERVRVVQDVLERPLIVENVSAYARLPGELEEVDFVRAVLEEADCQLLLDVNNVYVNACNFGFDAHAYIAAMPSRRIAYLHMAGHDEQGASLKIDTHGAPVCDPVWELLAHAYACHGERPTLLERDFNLPPLSELYAETDRIRELQRRSGEAQLRSLGYGT.

It belongs to the UPF0276 family.

The sequence is that of UPF0276 protein PA14_21580 from Pseudomonas aeruginosa (strain UCBPP-PA14).